We begin with the raw amino-acid sequence, 118 residues long: Large ribosomal subunit protein bL20 (118 aa).

This sequence belongs to the bacterial ribosomal protein bL20 family.

In terms of biological role, binds directly to 23S ribosomal RNA and is necessary for the in vitro assembly process of the 50S ribosomal subunit. It is not involved in the protein synthesizing functions of that subunit. The sequence is that of Large ribosomal subunit protein bL20 (rplT) from Buchnera aphidicola subsp. Acyrthosiphon pisum (strain APS) (Acyrthosiphon pisum symbiotic bacterium).